Here is a 276-residue protein sequence, read N- to C-terminus: UPF0328 protein ECU03_0010 (276 aa).

Disordered stretches follow at residues 1–132 (MAAP…PIIS) and 156–176 (SFCQNTRDSPSLPPQRPNMVH). The segment covering 106-126 (HTEGCHTHEANPEPNTKHTET) has biased composition (basic and acidic residues).

It belongs to the UPF0328 family.

The protein is UPF0328 protein ECU03_0010 of Encephalitozoon cuniculi (strain GB-M1) (Microsporidian parasite).